Here is a 320-residue protein sequence, read N- to C-terminus: Aspartate carbamoyltransferase catalytic subunit (320 aa).

Arginine 70 and threonine 71 together coordinate carbamoyl phosphate. Position 98 (lysine 98) interacts with L-aspartate. Carbamoyl phosphate is bound by residues arginine 120, histidine 149, and glutamine 152. Positions 182 and 237 each coordinate L-aspartate. Carbamoyl phosphate is bound by residues glycine 278 and proline 279.

Belongs to the aspartate/ornithine carbamoyltransferase superfamily. ATCase family. In terms of assembly, heterododecamer (2C3:3R2) of six catalytic PyrB chains organized as two trimers (C3), and six regulatory PyrI chains organized as three dimers (R2).

The enzyme catalyses carbamoyl phosphate + L-aspartate = N-carbamoyl-L-aspartate + phosphate + H(+). Its pathway is pyrimidine metabolism; UMP biosynthesis via de novo pathway; (S)-dihydroorotate from bicarbonate: step 2/3. Catalyzes the condensation of carbamoyl phosphate and aspartate to form carbamoyl aspartate and inorganic phosphate, the committed step in the de novo pyrimidine nucleotide biosynthesis pathway. In Ruthia magnifica subsp. Calyptogena magnifica, this protein is Aspartate carbamoyltransferase catalytic subunit.